We begin with the raw amino-acid sequence, 1196 residues long: DNA excision repair protein ERCC-5 homolog (1196 aa).

The segment at 1-78 (MGVQGLWKLL…RIRPIFVFDG (78 aa)) is N-domain. Mg(2+) is bound at residue aspartate 30. The DNA-binding; may bind to the undamaged single-strand DNA of the DNA repair bubble stretch occupies residues 31-67 (ISIWLNQAVKGARDRQGNAIQNAHLLTLFHRLCKLLF). Residue aspartate 77 coordinates Mg(2+). The segment at 79–818 (EAPLLKRQTL…LQLFGIPYIV (740 aa)) is spacer region. Disordered regions lie at residues 152-176 (PLEDNENNSSEEEEEREWEERMNQK), 302-321 (KQEEKKVDSPPQSITFNSSQ), 629-661 (QTTQPSGGSEVNKPAEYNPQDKKVFGSNDSSAM), and 722-758 (AVEEGNSGSQDIPLEHDSGEPHEQSNSEESKDLDDVS). Over residues 154-168 (EDNENNSSEEEEERE) the composition is skewed to acidic residues. A compositionally biased stretch (polar residues) spans 311-321 (PPQSITFNSSQ). The span at 722–731 (AVEEGNSGSQ) shows a compositional bias: polar residues. Basic and acidic residues predominate over residues 734-755 (PLEHDSGEPHEQSNSEESKDLD). Residues 819–914 (APMEAEAQCA…VSAMEILNEF (96 aa)) are I-domain. Residues glutamate 822, glutamate 824, aspartate 843, and aspartate 845 each contribute to the Mg(2+) site. The tract at residues 853–869 (HVYKNFFSQNKHVEYYQ) is DNA-binding; may bind to the undamaged single-strand DNA of the DNA repair bubble. Residues 881 to 913 (RSKLINLAYLLGSDYTEGIPTVGYVSAMEILNE) form a DNA-binding; H2TH (helix-2turn-helix) motif which binds double-stranded DNA region. Mg(2+) is bound at residue aspartate 894. Residues 945–951 (TKVKKKL) are DNA-binding; may bind double-stranded DNA. Residues 1075 to 1196 (CTNQRKGQKT…KTMKETVKRK (122 aa)) are disordered. The short motif at 1079–1095 (RKGQKTNTKSQGTKRRK) is the Nuclear localization signal 1 element. A compositionally biased stretch (low complexity) spans 1119–1130 (SSKAYSSDGSSS). Over residues 1142-1158 (KQSQSGIVGRQKASNKV) the composition is skewed to polar residues. A Nuclear localization signal 2 motif is present at residues 1179 to 1196 (FQGKKTKSKTMKETVKRK).

It belongs to the XPG/RAD2 endonuclease family. XPG subfamily. As to quaternary structure, monomer. Homodimer. It depends on Mg(2+) as a cofactor.

Its subcellular location is the nucleus. It localises to the chromosome. Its function is as follows. Single-stranded structure-specific DNA endonuclease involved in DNA excision repair. Makes the 3'incision in DNA nucleotide excision repair (NER). Binds and bends DNA repair bubble substrate and breaks base stacking at the single-strand/double-strand DNA junction of the DNA bubble. Plays a role in base excision repair (BER) by promoting the binding of DNA glycosylase to its substrate and increasing DNA glycosylase catalytic activity that removes oxidized pyrimidines from DNA. Involved in transcription-coupled nucleotide excision repair (TCR) which allows RNA polymerase II-blocking lesions to be rapidly removed from the transcribed strand of active genes. Required for DNA replication fork maintenance and preservation of genomic stability. Involved in homologous recombination repair (HRR) induced by DNA replication stress. During HRR, binds to the replication fork with high specificity and stabilizes it. The chain is DNA excision repair protein ERCC-5 homolog (ercc5) from Xenopus laevis (African clawed frog).